Reading from the N-terminus, the 110-residue chain is MSQYMDISGIHLYSINGFPIVYINQRRGNNNHRSRSNVMHKCKICEWEIDAASSALFCSMECKFRSVLGSQLDELMENSSEVTEISEEIDEPVMKKRHRRKGSPHRAPFF.

The tract at residues 86 to 110 is disordered; that stretch reads SEEIDEPVMKKRHRRKGSPHRAPFF. Residues 95-104 are compositionally biased toward basic residues; sequence KKRHRRKGSP.

This is an uncharacterized protein from Arabidopsis thaliana (Mouse-ear cress).